Consider the following 167-residue polypeptide: Leukotoxin-activating lysine-acyltransferase LktC serotype A1 (167 aa).

Active-site residues include histidine 22 and aspartate 91.

It belongs to the RTX toxin acyltransferase family.

It is found in the cytoplasm. It carries out the reaction a fatty acyl-[ACP] + L-lysyl-[protein] = N(6)-(fatty acyl)-L-lysyl-[protein] + holo-[ACP] + H(+). Functionally, involved in fatty acylation of the protoxin (LktA) at two internal lysine residues, thereby converting it to the active toxin. This chain is Leukotoxin-activating lysine-acyltransferase LktC serotype A1 (lktC), found in Mannheimia haemolytica (Pasteurella haemolytica).